Here is a 283-residue protein sequence, read N- to C-terminus: 4-diphosphocytidyl-2-C-methyl-D-erythritol kinase (283 aa).

Lys-13 is a catalytic residue. 96-106 (PMGGGIGGGSS) is an ATP binding site. Asp-138 is a catalytic residue.

It belongs to the GHMP kinase family. IspE subfamily.

The catalysed reaction is 4-CDP-2-C-methyl-D-erythritol + ATP = 4-CDP-2-C-methyl-D-erythritol 2-phosphate + ADP + H(+). It functions in the pathway isoprenoid biosynthesis; isopentenyl diphosphate biosynthesis via DXP pathway; isopentenyl diphosphate from 1-deoxy-D-xylulose 5-phosphate: step 3/6. Functionally, catalyzes the phosphorylation of the position 2 hydroxy group of 4-diphosphocytidyl-2C-methyl-D-erythritol. The protein is 4-diphosphocytidyl-2-C-methyl-D-erythritol kinase of Pseudomonas fluorescens (strain SBW25).